We begin with the raw amino-acid sequence, 352 residues long: Fatty acid desaturase (352 aa).

2 helical membrane passes run 28-48 and 55-75; these read SLIQ…LAYL and LLTL…FIIF. The Histidine box-1 motif lies at 76-80; sequence HDCCH. The helical transmembrane segment at 89–109 threads the bilayer; sequence YNHILGFLTGVLTLFPYLQWQ. A Histidine box-2 motif is present at residues 112-116; the sequence is HSIHH. The next 3 membrane-spanning stretches (helical) occupy residues 151 to 171, 186 to 206, and 209 to 229; these read LYRN…LITN, TYLT…IFGW, and FLLV…WLFY. The Histidine box-3 signature appears at 274 to 278; it reads HHVHH.

This sequence belongs to the fatty acid desaturase type 1 family.

It localises to the cell membrane. Its pathway is lipid metabolism; fatty acid metabolism. Its function is as follows. Catalyzes the introduction of a cis-double bond at the delta(5) position of existing saturated fatty acids attached to membrane phospholipids. It is not strictly specific for palmitic acid (C16) but can also accept C14 as well as C18 species to yield unsaturated fatty acids. The protein is Fatty acid desaturase (des) of Bacillus subtilis (strain 168).